The following is a 243-amino-acid chain: 7-cyano-7-deazaguanine synthase (243 aa).

18 to 28 provides a ligand contact to ATP; that stretch reads FSGGQDSATCL. Zn(2+) is bound by residues cysteine 206, cysteine 221, cysteine 224, and cysteine 227.

Belongs to the QueC family. Zn(2+) is required as a cofactor.

It catalyses the reaction 7-carboxy-7-deazaguanine + NH4(+) + ATP = 7-cyano-7-deazaguanine + ADP + phosphate + H2O + H(+). It functions in the pathway purine metabolism; 7-cyano-7-deazaguanine biosynthesis. Functionally, catalyzes the ATP-dependent conversion of 7-carboxy-7-deazaguanine (CDG) to 7-cyano-7-deazaguanine (preQ(0)). This Methylorubrum extorquens (strain CM4 / NCIMB 13688) (Methylobacterium extorquens) protein is 7-cyano-7-deazaguanine synthase.